A 446-amino-acid polypeptide reads, in one-letter code: Elongation factor 1-alpha (446 aa).

In terms of domain architecture, tr-type G spans 5 to 230 (KNHLNLVVIG…DALDQPKRPK (226 aa)). The interval 14-21 (GHVDSGKS) is G1. 14–21 (GHVDSGKS) contacts GTP. The G2 stretch occupies residues 70–74 (GITID). A G3 region spans residues 91-94 (DAPG). Residues 91–95 (DAPGH) and 153–156 (NKMD) each bind GTP. The tract at residues 153–156 (NKMD) is G4. Residues 194-196 (SGW) are G5.

Belongs to the TRAFAC class translation factor GTPase superfamily. Classic translation factor GTPase family. EF-Tu/EF-1A subfamily.

The protein localises to the cytoplasm. Functionally, this protein promotes the GTP-dependent binding of aminoacyl-tRNA to the A-site of ribosomes during protein biosynthesis. The chain is Elongation factor 1-alpha (EFAA) from Stylonychia lemnae (Ciliate).